The following is a 184-amino-acid chain: UPF0669 protein C6orf120 homolog (184 aa).

An N-terminal signal peptide occupies residues 1–23; sequence MAAPWTGALLLLLASQAVSSAQA. Asparagine 47 carries N-linked (GlcNAc...) asparagine glycosylation.

This sequence belongs to the UPF0669 family.

Its subcellular location is the secreted. In terms of biological role, may be involved in induction of apoptosis in CD4(+) T-cells, but not CD8(+) T-cells or hepatocytes. The sequence is that of UPF0669 protein C6orf120 homolog from Bos taurus (Bovine).